A 116-amino-acid polypeptide reads, in one-letter code: Putative UPF0320 protein YJR162C (116 aa).

The protein belongs to the UPF0320 family.

This Saccharomyces cerevisiae (strain ATCC 204508 / S288c) (Baker's yeast) protein is Putative UPF0320 protein YJR162C.